Reading from the N-terminus, the 236-residue chain is Protein-L-isoaspartate O-methyltransferase 1 (236 aa).

Serine 85 is an active-site residue.

It belongs to the methyltransferase superfamily. L-isoaspartyl/D-aspartyl protein methyltransferase family.

The protein resides in the cytoplasm. It catalyses the reaction [protein]-L-isoaspartate + S-adenosyl-L-methionine = [protein]-L-isoaspartate alpha-methyl ester + S-adenosyl-L-homocysteine. In terms of biological role, catalyzes the methyl esterification of L-isoaspartyl residues in peptides and proteins that result from spontaneous decomposition of normal L-aspartyl and L-asparaginyl residues. It plays a role in the repair and/or degradation of damaged proteins. In Polaromonas sp. (strain JS666 / ATCC BAA-500), this protein is Protein-L-isoaspartate O-methyltransferase 1.